The primary structure comprises 742 residues: Probable LRR receptor-like serine/threonine-protein kinase At2g02780 (742 aa).

Residues 1–25 (MQISLQIHLSSFTFLLLIFLLPVLS) form the signal peptide. Residues 26 to 354 (ESQVASSESQ…KDSARIKLGL (329 aa)) lie on the Extracellular side of the membrane. 9 LRR repeats span residues 74–96 (HGHV…SFHK), 104–128 (LSSL…IITK), 130–154 (SPSL…IVSL), 156–177 (NLKS…DLRG), 178–204 (LSNL…KLTT), 206–223 (SLKN…IKKL), 224–247 (NNLQ…LFSI), 249–271 (SLQI…SCTS), and 273–294 (KIIT…CYSS). A glycan (N-linked (GlcNAc...) asparagine) is linked at Asn-85. An N-linked (GlcNAc...) asparagine glycan is attached at Asn-137. N-linked (GlcNAc...) asparagine glycosylation is present at Asn-209. An N-linked (GlcNAc...) asparagine glycan is attached at Asn-266. N-linked (GlcNAc...) asparagine glycosylation is present at Asn-299. The chain crosses the membrane as a helical span at residues 355-375 (VILIIIGVIILAAILVLLVLI). The Cytoplasmic segment spans residues 376–742 (ALKRRRSRSE…HESSMKAIYE (367 aa)). The disordered stretch occupies residues 386–424 (DDPFEVNNSNNERHASDKVSVCSTTTASSKSLPDSRRVP). Residues 406–417 (VCSTTTASSKSL) are compositionally biased toward polar residues. The Protein kinase domain occupies 426 to 720 (TMRSAVIGLP…DVVWNLQYTI (295 aa)).

This sequence belongs to the protein kinase superfamily. Ser/Thr protein kinase family.

The protein resides in the membrane. The catalysed reaction is L-seryl-[protein] + ATP = O-phospho-L-seryl-[protein] + ADP + H(+). The enzyme catalyses L-threonyl-[protein] + ATP = O-phospho-L-threonyl-[protein] + ADP + H(+). This Arabidopsis thaliana (Mouse-ear cress) protein is Probable LRR receptor-like serine/threonine-protein kinase At2g02780.